The primary structure comprises 527 residues: GMP synthase [glutamine-hydrolyzing] (527 aa).

One can recognise a Glutamine amidotransferase type-1 domain in the interval 11-209; that stretch reads RILILDFGSQ…VLNICGCENL (199 aa). C88 acts as the Nucleophile in catalysis. Active-site residues include H183 and E185. The 193-residue stretch at 210 to 402 folds into the GMPS ATP-PPase domain; that stretch reads WTSANIIEDA…LGLPYNMLYR (193 aa). Position 237 to 243 (237 to 243) interacts with ATP; the sequence is SGGVDSS.

In terms of assembly, homodimer.

It carries out the reaction XMP + L-glutamine + ATP + H2O = GMP + L-glutamate + AMP + diphosphate + 2 H(+). The protein operates within purine metabolism; GMP biosynthesis; GMP from XMP (L-Gln route): step 1/1. Catalyzes the synthesis of GMP from XMP. In Photobacterium profundum (strain SS9), this protein is GMP synthase [glutamine-hydrolyzing].